Here is a 1059-residue protein sequence, read N- to C-terminus: Ubiquitin carboxyl-terminal hydrolase 36 (1059 aa).

2 disordered regions span residues 24–49 (VGNG…DSEM) and 94–148 (SNNN…KPKR). A compositionally biased stretch (low complexity) spans 94-123 (SNNNNSSSCNGSNFGNSKVVGANGHDNGNN). The span at 130–139 (QSESTQSGPS) shows a compositional bias: polar residues. The USP domain occupies 171-479 (TGMINVGNTC…NAYIMFYELD (309 aa)). Cys-180 serves as the catalytic Nucleophile. The active-site Proton acceptor is His-438. Residues 505–673 (TVSSSSPTHT…KTPLKSSVKT (169 aa)) form a disordered region. A phosphoserine mark is found at Ser-508 and Ser-510. A compositionally biased stretch (polar residues) spans 528–539 (GYSNGHATGSSN). 3 stretches are compositionally biased toward low complexity: residues 540–560 (AQKT…NGLQ), 592–611 (NGNK…KSVN), and 633–647 (ATAT…RPTA). Over residues 655 to 664 (MTEDSSDKPK) the composition is skewed to basic and acidic residues. Residues Thr-673 and Thr-682 each carry the phosphothreonine modification. Disordered regions lie at residues 687 to 893 (LVPY…EAST), 926 to 998 (KELV…RYHN), and 1012 to 1059 (KYNR…QSSS). 2 positions are modified to phosphoserine: Ser-692 and Ser-694. 2 stretches are compositionally biased toward low complexity: residues 729 to 739 (TKTNGGSLTNG) and 752 to 765 (SSSS…ASAA). Ser-766 is subject to Phosphoserine. The span at 766–776 (SDDEDADEEEE) shows a compositional bias: acidic residues. Polar residues predominate over residues 779-795 (KLTNGWQPQKQSQSLTQ). Positions 799 to 808 (PPSPKTPPSP) are enriched in pro residues. Ser-801 carries the phosphoserine modification. Thr-804 carries the post-translational modification Phosphothreonine. Ser-807 carries the post-translational modification Phosphoserine. Residues 825–839 (DNEDEDDDDDEDEEE) show a composition bias toward acidic residues. Composition is skewed to polar residues over residues 842–862 (QVVS…STTP) and 876–893 (KSQQ…EAST). 2 positions are modified to phosphothreonine: Thr-846 and Thr-861. Positions 926-940 (KELVAEAREQRQHDH) are enriched in basic and acidic residues. The span at 1048-1059 (QQQQQQSQQSSS) shows a compositional bias: low complexity.

The protein belongs to the peptidase C19 family. As to quaternary structure, interacts with atms/PAF1, but not with CycT.

It localises to the nucleus. The protein resides in the nucleolus. It catalyses the reaction Thiol-dependent hydrolysis of ester, thioester, amide, peptide and isopeptide bonds formed by the C-terminal Gly of ubiquitin (a 76-residue protein attached to proteins as an intracellular targeting signal).. Functionally, required for maintaining multiple types of adult stem cells, including male and female germline, epithelial follicle cell and intestinal stem cells. May function as a transcriptional repressor by continually deubiquiting histone H2B at the promoters of genes critical for cellular differentiation, thereby preventing histone H3 'Lys-4' trimethylation (H3K4). Controls selective autophagy activation by ubiquitinated proteins. In Drosophila pseudoobscura pseudoobscura (Fruit fly), this protein is Ubiquitin carboxyl-terminal hydrolase 36 (Usp36).